The chain runs to 1091 residues: MEVSADPYEQKLYQMFRSCETQCGLLDEKSLLKLCSLLELRDQGSALIASLGGSHQLGVSFGQFKEALLNFLGSEFDGNTSSGFIERSLVITDEPLNNTYIESPPESSDREVSPKLVVGTKKYGRRSRPQQGIYELSVTDSDNTDEDQLQQQQNQRSLNGCDELGVQVQRSSSQSDLPGSRRLRSVHTSGSKLKRCASLPARRKMNSNTTGATTSPTAAAKLKQLSIQSQAQHSSSVESLDTVTPQQLETISVHSIMEAWELASIPNTRNLLHVLGFDEEEEVNLQQLTKALEEELRGIDGDHEQSNMLRALAALQATELGNYRLAYRQQHEENLKLRADNKAANQRVALLAVEVDERHASLEDNSKKQVQQLEQRHASMVREITLRMTNDRDHWTSMTGKLEAQLKSLEQEEIRLRTELELVRTENTELESEQQKAHIQITELLEQNIKLNQELAQTSSSIGGTPEHSPLRPRRHSEDKEEEMLQLMEKLAALQMENAQLRDKTDELTIEIESLNVELIRSKTKAKKQEKQEKQEDQESAATATKRRGDSPSKTHLTEESPRLGKQRKCTEGEQSDASNSGDWLALNSELQRSQSQDEELTSLRQRVAELEEELKAAKEGRSLTPESRSKELETSLEQMQRAYEDCEDYWQTKLSEERQLFEKERQIYEDEQHESDKKFTELMEKVREYEEQFSKDGRLSPIDERDMLEQQYSELEAEAAQLRSSSIQMLEEKAQEISSLQSEIEDLRQRLGESVEILTGACELTSESVAQLSAEAGKSPASSPISYLWLQSTIQEPAKSLADSKDEATASAIELLGGSPSHKTASRNNLTTSETSIFSTTPFESSQSGPSPTNSGNSNAYGANPGPAPISKPKRSQSPQQAAASEGEIADCETSSTASGKSFESNSKTSCLSHEKCSSPSALKEELKRLKFFELSLKEQIKDLSLQRDGLVMELQQLQEARPVLEKAYARTTHPTLQQRLNQLELRNRHLQNVIKQQQHYTESLMQQSWRQHQVELNDLHSRIETQGVLLADQTQRLQSADILVKDLYVENSHLTATVQRLEQQRARVNLIHQQQQQQRLVGGGLPGMP.

Residues 1–361 are sufficient for binding to microtubules; that stretch reads MEVSADPYEQ…AVEVDERHAS (361 aa). 4 disordered regions span residues 100 to 216, 456 to 483, 525 to 602, and 616 to 639; these read YIES…TTSP, AQTS…KEEE, KAKK…EELT, and KAAK…SLEQ. Phosphoserine is present on residues Ser-103, Ser-107, Ser-108, Ser-113, and Ser-141. Phosphothreonine is present on Thr-144. The span at 168–177 shows a compositional bias: polar residues; that stretch reads VQRSSSQSDL. Positions 487-526 are sufficient for interaction with ens; the sequence is LMEKLAALQMENAQLRDKTDELTIEIESLNVELIRSKTKA. 2 stretches are compositionally biased toward basic and acidic residues: residues 527–537 and 547–563; these read KKQEKQEKQED and RRGD…ESPR. Ser-594 carries the phosphoserine modification. Residues 616–634 show a composition bias toward basic and acidic residues; the sequence is KAAKEGRSLTPESRSKELE. 2 positions are modified to phosphoserine: Ser-701 and Ser-714. A disordered region spans residues 799–919; that stretch reads AKSLADSKDE…TSCLSHEKCS (121 aa). Polar residues predominate over residues 822-845; that stretch reads SHKTASRNNLTTSETSIFSTTPFE. Residues 846-860 show a composition bias toward low complexity; that stretch reads SSQSGPSPTNSGNSN. Residues 894–913 are compositionally biased toward polar residues; that stretch reads ETSSTASGKSFESNSKTSCL.

Interacts with ens.

The protein resides in the cytoplasm. It localises to the cytoskeleton. Its subcellular location is the microtubule organizing center. It is found in the centrosome. The protein localises to the perinuclear region. Functionally, required for the positioning and anchorage of the microtubule minus-ends in various cells. In fat body cells, part of perinuclear non-centrosomal microtubule-organizing centers (ncMTOCs) which function to accommodate the organization of microtubule (MT) networks to control nuclear positioning and dynein motor-based retrograde endosomal trafficking. Within the ncMTOCs, Msp300 and shot anchors the ncMTOC at the nuclear surface and recruits the MT minus-end regulators Patronin and Nin for assembly, anchoring and/or stabilization of circumferential and radial MTs at the ncMTOC. This protein may also function with Patronin to recruit msps to the ncMTOC for the gamma-tubulin-independent elongation of radial MTs. In embryonic myotubes and larval myofibers, functions with ens to regulate myonuclear positioning and, as a consequence, is involved in muscle development. Likely functions by positively regulating ens. Essential for embryogenesis, likely by contributing to accurate chromosome segregation during early embryonic nuclear divisions. However, other reports found that it is not essential for embryogenesis or embryonic cellular divisions. In Drosophila melanogaster (Fruit fly), this protein is Ninein homolog.